The following is a 77-amino-acid chain: Cytoplasmic envelopment protein 3 (77 aa).

Gly2 carries N-myristoyl glycine; by host lipidation.

This sequence belongs to the herpesviridae cytoplasmic envelopment protein 3 family. As to quaternary structure, interacts with cytoplasmic envelopment protein 2; this interaction is essential for the proper localization of each protein to the assembly complex and thus for the production of infectious virus. In terms of processing, myristoylation and palmitoylation (probably on one or more of the nearby cysteines at the N-terminus) enable membrane-binding and Golgi apparatus-specific targeting and are essential for efficient packaging. Phosphorylated. Phosphorylation does not seem to be required for recycling to the host Golgi apparatus. Packaging is selective for underphosphorylated forms.

It localises to the virion tegument. Its subcellular location is the virion membrane. The protein resides in the host cell membrane. It is found in the host Golgi apparatus membrane. Its function is as follows. Plays an important role in the cytoplasmic envelopment of tegument proteins and capsids during the assembly and egress processes. Also participates in viral entry at the fusion step probably by regulating the core fusion machinery. This is Cytoplasmic envelopment protein 3 (U71) from Human herpesvirus 6A (strain Uganda-1102) (HHV-6 variant A).